The following is a 472-amino-acid chain: UDP-N-acetylmuramate--L-alanine ligase (472 aa).

Gly-118 to Thr-124 contributes to the ATP binding site.

The protein belongs to the MurCDEF family.

It is found in the cytoplasm. It carries out the reaction UDP-N-acetyl-alpha-D-muramate + L-alanine + ATP = UDP-N-acetyl-alpha-D-muramoyl-L-alanine + ADP + phosphate + H(+). It participates in cell wall biogenesis; peptidoglycan biosynthesis. Cell wall formation. This Methylococcus capsulatus (strain ATCC 33009 / NCIMB 11132 / Bath) protein is UDP-N-acetylmuramate--L-alanine ligase.